The sequence spans 274 residues: Orotidine 5'-phosphate decarboxylase (274 aa).

Residue lysine 95 is the Proton donor of the active site.

This sequence belongs to the OMP decarboxylase family. Type 2 subfamily.

The catalysed reaction is orotidine 5'-phosphate + H(+) = UMP + CO2. Its pathway is pyrimidine metabolism; UMP biosynthesis via de novo pathway; UMP from orotate: step 2/2. The sequence is that of Orotidine 5'-phosphate decarboxylase from Paracidovorax citrulli (strain AAC00-1) (Acidovorax citrulli).